The following is a 215-amino-acid chain: Endonuclease III (215 aa).

The HhH domain occupies 113 to 132 (REDLESLPGVGRKTANVILN). C192, C199, C202, and C208 together coordinate [4Fe-4S] cluster.

It belongs to the Nth/MutY family. [4Fe-4S] cluster is required as a cofactor.

The enzyme catalyses 2'-deoxyribonucleotide-(2'-deoxyribose 5'-phosphate)-2'-deoxyribonucleotide-DNA = a 3'-end 2'-deoxyribonucleotide-(2,3-dehydro-2,3-deoxyribose 5'-phosphate)-DNA + a 5'-end 5'-phospho-2'-deoxyribonucleoside-DNA + H(+). DNA repair enzyme that has both DNA N-glycosylase activity and AP-lyase activity. The DNA N-glycosylase activity releases various damaged pyrimidines from DNA by cleaving the N-glycosidic bond, leaving an AP (apurinic/apyrimidinic) site. The AP-lyase activity cleaves the phosphodiester bond 3' to the AP site by a beta-elimination, leaving a 3'-terminal unsaturated sugar and a product with a terminal 5'-phosphate. The polypeptide is Endonuclease III (Buchnera aphidicola subsp. Baizongia pistaciae (strain Bp)).